The sequence spans 834 residues: Enhancer of filamentation 1 (834 aa).

The required for interaction with ITCH stretch occupies residues 1 to 505 (MKYKNLMARA…HQILSQTSHD (505 aa)). The SH3 domain occupies 3–65 (YKNLMARALY…PGNRVKLLIG (63 aa)). Phosphotyrosine; by ABL1 occurs at positions 92, 164, 166, 177, 189, 214, and 223. Positions 102-229 (RDTIYQVPPS…KGVYAIPPSA (128 aa)) are interacts strongly with spindle-regulatory protein D1M1. The interval 238–260 (EKDYDFPPPMRQAGRPDLRPEGV) is disordered. Position 279 is a phosphotyrosine; by ABL1 (Tyr-279). The disordered stretch occupies residues 291–316 (ARRHQSLSPNHPPPQLGQSVGSQNDA). Ser-296 is subject to Phosphoserine. The segment covering 306–315 (LGQSVGSQND) has biased composition (polar residues). Position 317 is a phosphotyrosine; by ABL1 (Tyr-317). 2 disordered regions span residues 328–398 (PPAE…SPAQ) and 560–623 (GPGS…GSER). Residues 332 to 344 (TSEKANPQERDGV) are compositionally biased toward basic and acidic residues. The interval 351–834 (NPPDAKGSRD…KRSLLEMATF (484 aa)) is interacts with CTTN. The short motif at 360–363 (DLVD) is the Caspase cleavage related site element. Ser-369 bears the Phosphoserine mark. Positions 369 to 395 (SFSSTGSTRSNMSTSSTSSKESSLSAS) are enriched in low complexity. Residues 710–760 (FYYDQCETHFISLLNAIDALFSCVSSAQPPRIFVAHSKFVILSAHKLVFIG) form a divergent helix-loop-helix motif region. Residues 710 to 834 (FYYDQCETHF…KRSLLEMATF (125 aa)) are required for interaction with PLK1. Residue Ser-780 is modified to Phosphoserine; by CSNK1D and CSNK1E. Thr-804 bears the Phosphothreonine; by CSNK1E mark.

It belongs to the CAS family. In terms of assembly, homodimer. Forms heterodimers with BCAR1/p130cas. Forms complexes with PTK2B/RAFTK, adapter protein CRKL and LYN kinase. Part of a complex composed of NEDD9, AURKA and CTTN; within the complex NEDD9 acts as a scaffold protein and is required for complex formation. Part of a ternary complex composed of SMAD3, ITCH/AIP4 and NEDD9/HEF1; within the complex NEDD9/HEF1 interacts (via N-terminus) with ITCH/AIP4 (via WW domains); the complex mediates ubiquitination and proteasomal degradation of NEDD9/HEF1. Interacts with SMAD3; the interaction promotes NEDD9 ubiquitination and proteasomal degradation. Interacts with ID2. Interacts with CTTN (via N-terminus). Interacts with MICAL. Interacts with TXNL4/DIM1. Interacts with BCAR3 (via Ras-GEF domain). Interacts with SH2D3C isoform 1 and isoform 2. Interacts with ECT2. Interacts with PTPN11/SHP-2 (via SH2 domains); the interaction is enhanced when NEDD9/CAS-L is tyrosine phosphorylated. Interacts (via C-terminus) with PLK1 (via polo box domains). Interacts with NKX2-5. Interacts with SMAD3; the interaction is inhibited by oxidation of NEDD9. Interacts with NEDD9/HEF1; interaction is induced by CXCL12 promotion of ABL-mediated phosphorylation of NEDD9/HEF1. Interacts (via SH3 domain) with PTK2/FAK. Interacts with FYN; in the presence of PTK2. Interacts with INPPL1/SHIP2. Cell cycle-regulated processing produces four isoforms: p115, p105, p65, and p55. Isoform p115 arises from p105 phosphorylation and appears later in the cell cycle. Isoform p55 arises from p105 as a result of cleavage at a caspase cleavage-related site and it appears specifically at mitosis. The p65 isoform is poorly detected. Post-translationally, polyubiquitinated by ITCH/AIP4, leading to proteasomal degradation. In terms of processing, PTK2/FAK1 phosphorylates the protein at the YDYVHL motif (conserved among all cas proteins) following integrin stimulation. The SRC family kinases (FYN, SRC, LCK and CRK) are recruited to the phosphorylated sites and can phosphorylate other tyrosine residues. Ligation of either integrin beta-1 or B-cell antigen receptor on tonsillar B-cells and B-cell lines promotes tyrosine phosphorylation and both integrin and BCR-mediated tyrosine phosphorylation requires an intact actin network. Phosphorylation is required to recruit NEDD9 to T-cell receptor microclusters at the periphery of newly formed immunological synapses. In fibroblasts transformation with oncogene v-ABL results in an increase in tyrosine phosphorylation. Transiently phosphorylated following CD3 cross-linking and this phosphorylated form binds to CRKL and C3G. A mutant lacking the SH3 domain is phosphorylated upon CD3 cross-linking but not upon integrin beta-1 cross-linking. Tyrosine phosphorylation occurs upon stimulation of the G-protein coupled C1a calcitonin receptor. Calcitonin-stimulated tyrosine phosphorylation is mediated by calcium- and protein kinase C-dependent mechanisms and requires the integrity of the actin cytoskeleton. Phosphorylation at Ser-369 induces proteasomal degradation. Phosphorylated by LYN. Phosphorylation at Ser-780 by CSNK1D or CSNK1E, or phosphorylation of Thr-804 by CSNK1E enhances the interaction of NEDD9 with PLK1. Expressed in B-cells (at protein level). Expressed in the respiratory epithelium of the main bronchi to the bronchioles in the lungs (at protein level). High levels detected in kidney, lung, and placenta. Expressed in lymphocytes.

It is found in the cytoplasm. The protein resides in the cell cortex. The protein localises to the nucleus. Its subcellular location is the golgi apparatus. It localises to the cell projection. It is found in the lamellipodium. The protein resides in the cell junction. The protein localises to the focal adhesion. Its subcellular location is the cytoskeleton. It localises to the spindle pole. It is found in the cilium. The protein resides in the cilium basal body. The protein localises to the basolateral cell membrane. Its subcellular location is the spindle. Functionally, scaffolding protein which plays a central coordinating role for tyrosine-kinase-based signaling related to cell adhesion. As a focal adhesion protein, plays a role in embryonic fibroblast migration. May play an important role in integrin beta-1 or B cell antigen receptor (BCR) mediated signaling in B- and T-cells. Integrin beta-1 stimulation leads to recruitment of various proteins including CRKL and SHPTP2 to the tyrosine phosphorylated form. Promotes adhesion and migration of lymphocytes; as a result required for the correct migration of lymphocytes to the spleen and other secondary lymphoid organs. Plays a role in the organization of T-cell F-actin cortical cytoskeleton and the centralization of T-cell receptor microclusters at the immunological synapse. Negatively regulates cilia outgrowth in polarized cysts. Modulates cilia disassembly via activation of AURKA-mediated phosphorylation of HDAC6 and subsequent deacetylation of alpha-tubulin. Positively regulates RANKL-induced osteoclastogenesis. Required for the maintenance of hippocampal dendritic spines in the dentate gyrus and CA1 regions, thereby involved in spatial learning and memory. This Homo sapiens (Human) protein is Enhancer of filamentation 1.